The chain runs to 307 residues: Transaldolase (307 aa).

Lysine 125 functions as the Schiff-base intermediate with substrate in the catalytic mechanism.

Belongs to the transaldolase family. Type 1 subfamily. Homodimer.

It is found in the cytoplasm. The enzyme catalyses D-sedoheptulose 7-phosphate + D-glyceraldehyde 3-phosphate = D-erythrose 4-phosphate + beta-D-fructose 6-phosphate. It participates in carbohydrate degradation; pentose phosphate pathway; D-glyceraldehyde 3-phosphate and beta-D-fructose 6-phosphate from D-ribose 5-phosphate and D-xylulose 5-phosphate (non-oxidative stage): step 2/3. Its function is as follows. Transaldolase is important for the balance of metabolites in the pentose-phosphate pathway. This Pseudomonas aeruginosa (strain LESB58) protein is Transaldolase.